A 260-amino-acid chain; its full sequence is MIEINNKVDYIFYTNNTPNTYKIKLILLELEKKHSITFESRYINITKKENYSDEFVKINPNKKVPAIVDQTGEKPFVVFESVSILIYLAQKYNTFLPDFKTNPHENSDVITWAVWQAANLGPAFGQYFHFSYFSPTVQEYSLHRFNNEAQRVLRLLDDRLSVSQYIGGNEFSIADIASAGWLLYLNFAPIYKATKERFPHIFKWLDLINQRDAVKEINQSISEGFKTFNPSALRALFTDDPELINAKAPIGIENVVLKYD.

A GST N-terminal domain is found at 7–96 (KVDYIFYTNN…YLAQKYNTFL (90 aa)). Residues 102–233 (NPHENSDVIT…GFKTFNPSAL (132 aa)) form the GST C-terminal domain.

The protein belongs to the GST superfamily.

The chain is Glutathione S-transferase domain-containing protein DDB_G0274223 from Dictyostelium discoideum (Social amoeba).